A 439-amino-acid chain; its full sequence is Hemagglutinin-esterase (439 aa).

The N-terminal stretch at M1 to V22 is a signal peptide. An esterase domain 1 region spans residues T12 to A132. The Virion surface segment spans residues F23–V407. S45 (nucleophile) is an active-site residue. Cysteines 49 and 70 form a disulfide. N94 is a glycosylation site (N-linked (GlcNAc...) asparagine; by host). A disulfide bridge connects residues C118 and C167. The receptor binding stretch occupies residues R133–Y281. N-linked (GlcNAc...) asparagine; by host glycans are attached at residues N196, N246, N309, and N316. Disulfide bonds link C202–C291 and C210–C264. Residues L282–Y395 are esterase domain 2. A disulfide bridge connects residues C322 and C327. A glycan (N-linked (GlcNAc...) asparagine; by host) is linked at N331. Residues D342 and H345 each act as charge relay system in the active site. N360 and N374 each carry an N-linked (GlcNAc...) asparagine; by host glycan. An intrachain disulfide couples C363 to C387. A helical transmembrane segment spans residues I408–F428. The Intravirion portion of the chain corresponds to M429–A439.

It belongs to the influenza type C/coronaviruses hemagglutinin-esterase family. As to quaternary structure, homodimer; disulfide-linked. Forms a complex with the M protein in the pre-Golgi. Associates then with S-M complex to form a ternary complex S-M-HE. In terms of processing, N-glycosylated in the host RER.

It is found in the virion membrane. It localises to the host cell membrane. The enzyme catalyses N-acetyl-9-O-acetylneuraminate + H2O = N-acetylneuraminate + acetate + H(+). The catalysed reaction is N-acetyl-4-O-acetylneuraminate + H2O = N-acetylneuraminate + acetate + H(+). Structural protein that makes short spikes at the surface of the virus. Contains receptor binding and receptor-destroying activities. Mediates de-O-acetylation of N-acetyl-4-O-acetylneuraminic acid, which is probably the receptor determinant recognized by the virus on the surface of erythrocytes and susceptible cells. This receptor-destroying activity is important for virus release as it probably helps preventing self-aggregation and ensures the efficient spread of the progeny virus from cell to cell. May serve as a secondary viral attachment protein for initiating infection, the spike protein being the major one. May become a target for both the humoral and the cellular branches of the immune system. This Rat coronavirus (strain 681) (RCV-SDAV) protein is Hemagglutinin-esterase.